Reading from the N-terminus, the 698-residue chain is Protein let-99 (698 aa).

In terms of domain architecture, DEP spans 23–107; it reads FRSNLSLKTN…SESRIYLFMK (85 aa). Disordered stretches follow at residues 115 to 188 and 653 to 672; these read PKPR…DDEI and ITRS…QASP. The segment covering 146-157 has biased composition (basic residues); sequence RPPKARLPRRLS. Over residues 178–188 the composition is skewed to basic and acidic residues; sequence HGFDDHKDDEI.

The protein resides in the cytoplasm. The protein localises to the cell cortex. In terms of biological role, required for the proper orientation of spindles after the establishment of polarity. May play a role in interactions between the astral microtubules and the cortical cytoskeleton. Required for asymmetric forces on nuclei and spindles. Acts downstream of the PAR signaling as an intermediate that transduces polarity information to the machinery that positions the mitotic spindle, possibly by regulating force generation. Regulates gpr-1/2 asymmetric cortical localization during the first embryonic cell divisions. Acts antagonistically to the gpr-1/2 signaling pathway. Regulates mes-1 expression and/or localization pattern during early embryogenesis. The sequence is that of Protein let-99 (let-99) from Caenorhabditis elegans.